The chain runs to 541 residues: Glucose-6-phosphate isomerase (541 aa).

Glutamate 346 serves as the catalytic Proton donor. Active-site residues include histidine 377 and lysine 506.

This sequence belongs to the GPI family.

Its subcellular location is the cytoplasm. It catalyses the reaction alpha-D-glucose 6-phosphate = beta-D-fructose 6-phosphate. It functions in the pathway carbohydrate biosynthesis; gluconeogenesis. The protein operates within carbohydrate degradation; glycolysis; D-glyceraldehyde 3-phosphate and glycerone phosphate from D-glucose: step 2/4. Catalyzes the reversible isomerization of glucose-6-phosphate to fructose-6-phosphate. This chain is Glucose-6-phosphate isomerase, found in Sinorhizobium medicae (strain WSM419) (Ensifer medicae).